A 246-amino-acid chain; its full sequence is 4-hydroxy-tetrahydrodipicolinate reductase (246 aa).

Residues 7–12, 84–86, and 108–111 contribute to the NAD(+) site; these read GATGRT, GTT, and ASNF. Catalysis depends on H140, which acts as the Proton donor/acceptor. H141 serves as a coordination point for (S)-2,3,4,5-tetrahydrodipicolinate. Catalysis depends on K144, which acts as the Proton donor. 150 to 151 contributes to the (S)-2,3,4,5-tetrahydrodipicolinate binding site; it reads GT.

This sequence belongs to the DapB family.

The protein localises to the cytoplasm. The catalysed reaction is (S)-2,3,4,5-tetrahydrodipicolinate + NAD(+) + H2O = (2S,4S)-4-hydroxy-2,3,4,5-tetrahydrodipicolinate + NADH + H(+). It catalyses the reaction (S)-2,3,4,5-tetrahydrodipicolinate + NADP(+) + H2O = (2S,4S)-4-hydroxy-2,3,4,5-tetrahydrodipicolinate + NADPH + H(+). It participates in amino-acid biosynthesis; L-lysine biosynthesis via DAP pathway; (S)-tetrahydrodipicolinate from L-aspartate: step 4/4. Its function is as follows. Catalyzes the conversion of 4-hydroxy-tetrahydrodipicolinate (HTPA) to tetrahydrodipicolinate. The protein is 4-hydroxy-tetrahydrodipicolinate reductase of Natronomonas pharaonis (strain ATCC 35678 / DSM 2160 / CIP 103997 / JCM 8858 / NBRC 14720 / NCIMB 2260 / Gabara) (Halobacterium pharaonis).